The chain runs to 59 residues: Large ribosomal subunit protein bL32 (59 aa).

A disordered region spans residues 1 to 59 (MAVQQNRKTPSKRGMRRSHDALSGPALSVEPQTGETHRRHHVSPDGYYRGRKVMQGRED). The segment covering 49-59 (RGRKVMQGRED) has biased composition (basic residues).

Belongs to the bacterial ribosomal protein bL32 family.

This chain is Large ribosomal subunit protein bL32, found in Alkalilimnicola ehrlichii (strain ATCC BAA-1101 / DSM 17681 / MLHE-1).